Reading from the N-terminus, the 241-residue chain is Uridylate kinase (241 aa).

An ATP-binding site is contributed by Lys15–Gly18. The segment at Gly23–Gly28 is involved in allosteric activation by GTP. Gly57 serves as a coordination point for UMP. Gly58 and Arg62 together coordinate ATP. UMP contacts are provided by residues Asp77 and Thr138 to Thr145. Positions 165, 171, and 174 each coordinate ATP.

The protein belongs to the UMP kinase family. As to quaternary structure, homohexamer.

The protein resides in the cytoplasm. The enzyme catalyses UMP + ATP = UDP + ADP. It participates in pyrimidine metabolism; CTP biosynthesis via de novo pathway; UDP from UMP (UMPK route): step 1/1. Its activity is regulated as follows. Allosterically activated by GTP. Inhibited by UTP. In terms of biological role, catalyzes the reversible phosphorylation of UMP to UDP. The sequence is that of Uridylate kinase from Vibrio vulnificus (strain CMCP6).